A 362-amino-acid polypeptide reads, in one-letter code: Heat-inducible transcription repressor HrcA (362 aa).

The protein belongs to the HrcA family.

In terms of biological role, negative regulator of class I heat shock genes (grpE-dnaK-dnaJ and groELS operons). Prevents heat-shock induction of these operons. The chain is Heat-inducible transcription repressor HrcA from Bradyrhizobium diazoefficiens (strain JCM 10833 / BCRC 13528 / IAM 13628 / NBRC 14792 / USDA 110).